The primary structure comprises 769 residues: Subtilisin-like protease 3 (769 aa).

N-linked (GlcNAc...) asparagine glycans are attached at residues asparagine 68, asparagine 102, asparagine 108, asparagine 295, asparagine 316, and asparagine 356. Positions 293-302 (KINHSNKHKN) are enriched in basic residues. The interval 293 to 329 (KINHSNKHKNNNNNNNNNDYHNNNKSNYHSHSSAKCQ) is disordered. Residues 303–325 (NNNNNNNNDYHNNNKSNYHSHSS) are compositionally biased toward low complexity. Residues 345–756 (GYDIIQMEEG…GGFINVYDLV (412 aa)) enclose the Peptidase S8 domain. Aspartate 372 (charge relay system) is an active-site residue. The segment at 468-493 (NIKSSDNIKSSDNINSSDNIKSSDNN) is disordered. Residues asparagine 482 and asparagine 515 are each glycosylated (N-linked (GlcNAc...) asparagine). The active-site Charge relay system is histidine 523. N-linked (GlcNAc...) asparagine glycans are attached at residues asparagine 584 and asparagine 616. Catalysis depends on serine 701, which acts as the Charge relay system. N-linked (GlcNAc...) asparagine glycosylation is present at asparagine 720.

The protein belongs to the peptidase S8 family.

The protein resides in the secreted. The enzyme catalyses Hydrolysis of proteins with broad specificity for peptide bonds, and a preference for a large uncharged residue in P1. Hydrolyzes peptide amides.. Functionally, serine protease which may cleave PFN/profilin. The polypeptide is Subtilisin-like protease 3 (Plasmodium falciparum (isolate 3D7)).